We begin with the raw amino-acid sequence, 162 residues long: Peroxiredoxin-2C (162 aa).

The region spanning 4-162 (ITVGDVVPDG…SSAEDILKAL (159 aa)) is the Thioredoxin domain. Cys-51 (cysteine sulfenic acid (-SOH) intermediate) is an active-site residue.

Belongs to the peroxiredoxin family. Prx5 subfamily. Monomer. In terms of tissue distribution, highly expressed in buds and flowers. Slightly expressed in green tissues. Also detected in pollen.

It localises to the cytoplasm. The catalysed reaction is [glutaredoxin]-dithiol + a hydroperoxide = [glutaredoxin]-disulfide + an alcohol + H2O. Thiol-specific peroxidase that catalyzes the reduction of hydrogen peroxide and organic hydroperoxides to water and alcohols, respectively. Plays a role in cell protection against oxidative stress by detoxifying peroxides and as sensor of hydrogen peroxide-mediated signaling events. The polypeptide is Peroxiredoxin-2C (PRXIIC) (Arabidopsis thaliana (Mouse-ear cress)).